Here is a 502-residue protein sequence, read N- to C-terminus: Cytochrome P450 71B19 (502 aa).

A helical membrane pass occupies residues methionine 1–lysine 21. Cysteine 444 is a heme binding site.

Belongs to the cytochrome P450 family. The cofactor is heme.

Its subcellular location is the membrane. The chain is Cytochrome P450 71B19 (CYP71B19) from Arabidopsis thaliana (Mouse-ear cress).